The sequence spans 128 residues: Sulfurtransferase TusD (128 aa).

The Cysteine persulfide intermediate role is filled by Cys-78.

It belongs to the DsrE/TusD family. Heterohexamer, formed by a dimer of trimers. The hexameric TusBCD complex contains 2 copies each of TusB, TusC and TusD. The TusBCD complex interacts with TusE.

It is found in the cytoplasm. Functionally, part of a sulfur-relay system required for 2-thiolation of 5-methylaminomethyl-2-thiouridine (mnm(5)s(2)U) at tRNA wobble positions. Accepts sulfur from TusA and transfers it in turn to TusE. This is Sulfurtransferase TusD from Shigella dysenteriae serotype 1 (strain Sd197).